The following is a 186-amino-acid chain: uncharacterized protein (186 aa).

This is an uncharacterized protein from Trypanosoma brucei brucei.